The following is a 1380-amino-acid chain: Inverted formin-2 (1380 aa).

One can recognise a GBD/FH3 domain in the interval 1 to 330; that stretch reads MSLKEGAHTK…RAVLLADDCQ (330 aa). 2 disordered regions span residues 341-391 and 440-541; these read LVTS…SGIP and ISTS…PPPL. A compositionally biased stretch (basic residues) spans 343-352; it reads TSKKHPSKEK. The segment covering 367–385 has biased composition (basic and acidic residues); sequence QTDKPKDESCEEKTVKKDP. The region spanning 432–592 is the FH1 domain; sequence VVSNAIDRIS…DYSLGYLPKA (161 aa). 2 stretches are compositionally biased toward pro residues: residues 446–470 and 478–541; these read LPPP…PPLP and TPPP…PPPL. Residues 593-981 enclose the FH2 domain; the sequence is YFKVNKPTLK…AEKRKKQLAD (389 aa). Coiled coils occupy residues 879 to 930 and 956 to 991; these read LKKL…KLAD and LKAK…KGEN. The WH2 domain maps to 1009-1024; sequence DALLADIKKGFQLRKT. Disordered regions lie at residues 1026–1049, 1188–1244, and 1260–1380; these read KTKT…DGTD, HKER…LSEA, and FQSS…CVVQ. Polar residues-rich tracts occupy residues 1206–1244, 1260–1284, and 1294–1303; these read GTES…LSEA, FQSS…QAQR, and TRDTTVTEGS. Residues 1306–1322 show a composition bias toward basic and acidic residues; the sequence is EEDKCNDEGYPEHKTMG. Over residues 1328-1339 the composition is skewed to low complexity; it reads SSSHSTTLQQSS. A compositionally biased stretch (basic residues) spans 1345 to 1359; the sequence is VKRGSSKHKKKRRSS.

Belongs to the formin homology family.

This Xenopus tropicalis (Western clawed frog) protein is Inverted formin-2 (inf2).